We begin with the raw amino-acid sequence, 124 residues long: Small ribosomal subunit protein uS12 (124 aa).

A disordered region spans residues 1 to 32; that stretch reads MPTIQQLVRKGREDKVVKTKTPALKGSPQRRG. The residue at position 89 (D89) is a 3-methylthioaspartic acid. Residues 105–124 are disordered; that stretch reads QGVKNRKQARSRYGAKKEKS. Over residues 108–118 the composition is skewed to basic residues; sequence KNRKQARSRYG.

Belongs to the universal ribosomal protein uS12 family. In terms of assembly, part of the 30S ribosomal subunit. Contacts proteins S8 and S17. May interact with IF1 in the 30S initiation complex.

In terms of biological role, with S4 and S5 plays an important role in translational accuracy. Its function is as follows. Interacts with and stabilizes bases of the 16S rRNA that are involved in tRNA selection in the A site and with the mRNA backbone. Located at the interface of the 30S and 50S subunits, it traverses the body of the 30S subunit contacting proteins on the other side and probably holding the rRNA structure together. The combined cluster of proteins S8, S12 and S17 appears to hold together the shoulder and platform of the 30S subunit. This is Small ribosomal subunit protein uS12 from Kineococcus radiotolerans (strain ATCC BAA-149 / DSM 14245 / SRS30216).